Consider the following 857-residue polypeptide: Median body protein (857 aa).

Coiled coils occupy residues 169–546 and 571–793; these read HNAL…MRTE and LAHL…TKAM.

The protein localises to the cytoplasm. It localises to the cytoskeleton. Functionally, structural component of the ventral disk involved in maintanance of a domed conformation of the disk required for proper attachment. May have a role in immobilizing the microtubules between cell divisions. This chain is Median body protein, found in Giardia intestinalis (strain ATCC 50803 / WB clone C6) (Giardia lamblia).